We begin with the raw amino-acid sequence, 198 residues long: MQRVTSYLPAGTPSSHPIAQVKLPHDLRHLRRKLLHLENGEMVMLDLKDPVLFANGDLLVRDDGELIEILAADEKLFEIRGRDRTHLVELAWHLGNRHLAAQIEEDRIVILRDHVIRAMLQGLGAVVLEIDEPFQPARGAYHSPGGHSHGHDHDHNHDHGHDHAHDHNHGHDHDHEHGYEHEHEHRHDRGHDHDHKHD.

The interval 137 to 198 is disordered; the sequence is ARGAYHSPGG…RGHDHDHKHD (62 aa). A compositionally biased stretch (basic and acidic residues) spans 149–198; it reads HGHDHDHNHDHGHDHAHDHNHGHDHDHEHGYEHEHEHRHDRGHDHDHKHD.

Belongs to the UreE family.

It is found in the cytoplasm. Its function is as follows. Involved in urease metallocenter assembly. Binds nickel. Probably functions as a nickel donor during metallocenter assembly. The sequence is that of Urease accessory protein UreE from Rhizobium johnstonii (strain DSM 114642 / LMG 32736 / 3841) (Rhizobium leguminosarum bv. viciae).